The chain runs to 255 residues: MSLDLSTSLSPARPLESADAMEERLREIGAARYHDRHPFHHMLHGGELTKGQVQAWALNRYYYQCTIPVKDAVVISRFRDRATRIEWRHRLEDHDGAEGAEGGIDRWLILTDGLGLDRAYVESTDGILPATRFAVEAYVHFVRDRSPLEAIASCLTELFAPNIHATRISGMLSHYDFINPTVMAYFQRRLTQAPRDADYALRYVRDHARTPEERAAVCNALIFKTQVLWTQLDALHHAYVLGHVPPGAFVPEEMR.

The protein belongs to the PqqC family.

The catalysed reaction is 6-(2-amino-2-carboxyethyl)-7,8-dioxo-1,2,3,4,7,8-hexahydroquinoline-2,4-dicarboxylate + 3 O2 = pyrroloquinoline quinone + 2 H2O2 + 2 H2O + H(+). It functions in the pathway cofactor biosynthesis; pyrroloquinoline quinone biosynthesis. Ring cyclization and eight-electron oxidation of 3a-(2-amino-2-carboxyethyl)-4,5-dioxo-4,5,6,7,8,9-hexahydroquinoline-7,9-dicarboxylic-acid to PQQ. The chain is Pyrroloquinoline-quinone synthase from Cereibacter sphaeroides (strain ATCC 17029 / ATH 2.4.9) (Rhodobacter sphaeroides).